Here is a 622-residue protein sequence, read N- to C-terminus: Solute carrier family 2, facilitated glucose transporter member 12 (622 aa).

Residues 1–26 (MVPVENTEGPNLLNQKGREAETEGSC) are disordered. At 1–44 (MVPVENTEGPNLLNQKGREAETEGSCGASGGGHPACAGGPSMFT) the chain is on the cytoplasmic side. A helical membrane pass occupies residues 45-65 (FLTSVTAAISGLLVGYELGLI). The Extracellular portion of the chain corresponds to 66 to 84 (SGALLQIRTLLALTCHEQE). A helical transmembrane segment spans residues 85-105 (MVVSSLLIGAFLASLTGGVLI). The Cytoplasmic segment spans residues 106–111 (DRYGRR). A helical transmembrane segment spans residues 112–132 (LAIILSSCLLGLGSLVLIMSL). The Extracellular portion of the chain corresponds to 133–141 (SYTLLIMGR). A helical transmembrane segment spans residues 142–162 (VAIGVSISLSSIATCVYIAEI). The Cytoplasmic portion of the chain corresponds to 163-168 (APQHRR). Residues 169–189 (GLLVSLNELMIVTGILFAYIS) traverse the membrane as a helical segment. Over 190–201 (NYAFANISNGWK) the chain is Extracellular. Asn-195 carries N-linked (GlcNAc...) asparagine glycosylation. A helical transmembrane segment spans residues 202 to 222 (YMFGLVIPLGVLQAIAMYFLP). Residues 223–282 (PSPRFLVMKGQEESAGKVLRKLRVISDTTEELTLIKSSLKDEYQYSFWDLFRSKDNMRTR) lie on the Cytoplasmic side of the membrane. The helical transmembrane segment at 283–303 (ILIGLTLVFFVQTTGQPNILF) threads the bilayer. Over 304 to 321 (YASTVLKSVGFQSNEAAS) the chain is Extracellular. Residues 322–342 (LASTGVGVVKVVSTIPATLLV) form a helical membrane-spanning segment. At 343-349 (DHIGSKT) the chain is on the cytoplasmic side. The helical transmembrane segment at 350–370 (FLCIGSSVMSASLLTMGIVNL) threads the bilayer. Topologically, residues 371–471 (NINMNFTNIC…PAAYKWLSLA (101 aa)) are extracellular. N-linked (GlcNAc...) asparagine glycosylation is found at Asn-375, Asn-387, Asn-400, and Asn-405. A helical membrane pass occupies residues 472–492 (SLLVYVAAFSIGLGPMPWLVL). Topologically, residues 493 to 503 (SEIFPGGIRGR) are cytoplasmic. The chain crosses the membrane as a helical span at residues 504-524 (AMALTSSMNWGVNLLISLTFL). Residues 525 to 533 (TVTDLIGLS) lie on the Extracellular side of the membrane. The chain crosses the membrane as a helical span at residues 534–554 (WVCFIYTIMSLASLAFVVLFI). Residues 555–622 (PETKGCSLEQ…GQSQRPSPDT (68 aa)) lie on the Cytoplasmic side of the membrane.

Belongs to the major facilitator superfamily. Sugar transporter (TC 2.A.1.1) family. Glucose transporter subfamily. As to expression, expressed in skeletal muscle, heart, brain, kidney, spleen, adipose tissues and to a lesser extent in small intestine and lung.

The protein resides in the cell membrane. Its subcellular location is the endomembrane system. It is found in the cytoplasm. It localises to the perinuclear region. It carries out the reaction D-glucose(out) = D-glucose(in). In terms of biological role, insulin-independent facilitative glucose transporter. This Mus musculus (Mouse) protein is Solute carrier family 2, facilitated glucose transporter member 12.